We begin with the raw amino-acid sequence, 497 residues long: tRNA-2-methylthio-N(6)-dimethylallyladenosine synthase (497 aa).

Over residues 1–10 (MTLLDSDSRQ) the composition is skewed to basic and acidic residues. Positions 1 to 26 (MTLLDSDSRQSAEVLPAAGPAPDRPR) are disordered. Residues 26 to 142 (RTYQVRTFGC…LPVLLERARI (117 aa)) form the MTTase N-terminal domain. The [4Fe-4S] cluster site is built by Cys35, Cys71, Cys105, Cys179, Cys183, and Cys186. Residues 165–395 (RESVYAAWVA…VALVEQIALE (231 aa)) form the Radical SAM core domain. Positions 398–464 (QAQVGRVVEV…PHCLIADQVL (67 aa)) constitute a TRAM domain.

Belongs to the methylthiotransferase family. MiaB subfamily. As to quaternary structure, monomer. [4Fe-4S] cluster is required as a cofactor.

The protein localises to the cytoplasm. The enzyme catalyses N(6)-dimethylallyladenosine(37) in tRNA + (sulfur carrier)-SH + AH2 + 2 S-adenosyl-L-methionine = 2-methylsulfanyl-N(6)-dimethylallyladenosine(37) in tRNA + (sulfur carrier)-H + 5'-deoxyadenosine + L-methionine + A + S-adenosyl-L-homocysteine + 2 H(+). In terms of biological role, catalyzes the methylthiolation of N6-(dimethylallyl)adenosine (i(6)A), leading to the formation of 2-methylthio-N6-(dimethylallyl)adenosine (ms(2)i(6)A) at position 37 in tRNAs that read codons beginning with uridine. The sequence is that of tRNA-2-methylthio-N(6)-dimethylallyladenosine synthase from Acidothermus cellulolyticus (strain ATCC 43068 / DSM 8971 / 11B).